The sequence spans 246 residues: 3-deoxy-manno-octulosonate cytidylyltransferase (246 aa).

The protein belongs to the KdsB family.

It localises to the cytoplasm. The enzyme catalyses 3-deoxy-alpha-D-manno-oct-2-ulosonate + CTP = CMP-3-deoxy-beta-D-manno-octulosonate + diphosphate. It functions in the pathway nucleotide-sugar biosynthesis; CMP-3-deoxy-D-manno-octulosonate biosynthesis; CMP-3-deoxy-D-manno-octulosonate from 3-deoxy-D-manno-octulosonate and CTP: step 1/1. The protein operates within bacterial outer membrane biogenesis; lipopolysaccharide biosynthesis. In terms of biological role, activates KDO (a required 8-carbon sugar) for incorporation into bacterial lipopolysaccharide in Gram-negative bacteria. The polypeptide is 3-deoxy-manno-octulosonate cytidylyltransferase (Bradyrhizobium diazoefficiens (strain JCM 10833 / BCRC 13528 / IAM 13628 / NBRC 14792 / USDA 110)).